The sequence spans 106 residues: PAT complex subunit Asterix (106 aa).

Residues 1–29 are disordered; sequence MSANNMSDPRRPNKVLRYKPPPSECNPAL. At Ser2 the chain carries N-acetylserine. Residues 2-32 are Cytoplasmic-facing; that stretch reads SANNMSDPRRPNKVLRYKPPPSECNPALDDP. The chain crosses the membrane as a helical span at residues 33 to 51; the sequence is TPDYMNLLGMIFSMCGLML. Residue Lys52 is a topological domain, lumenal. The chain crosses the membrane as a helical span at residues 53–70; the sequence is LKWCAWVAVYCSFISFAN. Residues 71 to 74 lie on the Cytoplasmic side of the membrane; the sequence is SRSS. Residues 75–95 traverse the membrane as a helical segment; it reads EDTKQMMSSFMLSISAVVMSY. Topologically, residues 96-106 are lumenal; it reads LQNPQPMTPPW.

It belongs to the Asterix family. As to quaternary structure, component of the PAT complex, composed of WDR83OS/Asterix and CCDC47. The PAT complex is part of the multi-pass translocon (MPT) complex, composed of three subcomplexes, the GEL complex (composed of RAB5IF/OPTI and TMCO1), the BOS complex (composed of NCLN/Nicalin, NOMO1 and TMEM147) and the PAT complex (composed of WDR83OS/Asterix and CCDC47). The MPT complex associates with the SEC61 complex.

It localises to the endoplasmic reticulum membrane. Component of the multi-pass translocon (MPT) complex that mediates insertion of multi-pass membrane proteins into the lipid bilayer of membranes. The MPT complex takes over after the SEC61 complex: following membrane insertion of the first few transmembrane segments of proteins by the SEC61 complex, the MPT complex occludes the lateral gate of the SEC61 complex to promote insertion of subsequent transmembrane regions. Within the MPT complex, the PAT subcomplex sequesters any highly polar regions in the transmembrane domains away from the non-polar membrane environment until they can be buried in the interior of the fully assembled protein. Within the PAT subcomplex, WDR83OS/Asterix binds to and redirects the substrate to a location behind the SEC61 complex. The chain is PAT complex subunit Asterix (WDR83OS) from Bos taurus (Bovine).